The chain runs to 429 residues: MLPKELEEIIDVVLVHNNWRRRETINLIASENVMSPLAELVYLNDMAGRYAEGTVGNRYYQGTKYVDLIEDVLTKRFAKALGATYVDVRPVSGTVANLATYFALVPEGGVVASLPVKYGGHISHNTVGGLKALRLKMVELPWDLDRFNIDVDRARKVIEEAKPNLVILGGSLYLFPHPIREIAEIAKASGAYVLHDSAHVFGLIIGGVFPNPLKEGAHVITTSTHKTFPGPQGGLIAAVVEDKVNDLQRAVFPVFTSNYHLHRYAATYVTLVEMEHFGAEYARRVVENARALAEALAEQGVPPVAEALGYTRTHQVAVDVSKFGGGDKVAAKLEEANIIVNKNALPWDKSVLKPSGIRLGVQEMTRFGMGKDEMREIAKFIARVLSGEDPAGVRRDVAEFRKAYLEIKYGFKIDRELVDKVFKSLSLYT.

120–122 (GHI) is a (6S)-5,6,7,8-tetrahydrofolate binding site. Lys226 carries the post-translational modification N6-(pyridoxal phosphate)lysine.

It belongs to the SHMT family. Homodimer. The cofactor is pyridoxal 5'-phosphate.

The protein localises to the cytoplasm. It participates in amino-acid biosynthesis; glycine biosynthesis; glycine from L-serine: step 1/1. Catalyzes the reversible interconversion of serine and glycine with a modified folate serving as the one-carbon carrier. Also exhibits a pteridine-independent aldolase activity toward beta-hydroxyamino acids, producing glycine and aldehydes, via a retro-aldol mechanism. The sequence is that of Serine hydroxymethyltransferase from Pyrobaculum arsenaticum (strain DSM 13514 / JCM 11321 / PZ6).